The following is a 91-amino-acid chain: Small ribosomal subunit protein uS17 (91 aa).

Belongs to the universal ribosomal protein uS17 family. In terms of assembly, part of the 30S ribosomal subunit.

Functionally, one of the primary rRNA binding proteins, it binds specifically to the 5'-end of 16S ribosomal RNA. The sequence is that of Small ribosomal subunit protein uS17 from Thermobifida fusca (strain YX).